Consider the following 303-residue polypeptide: Probable cell division protein WhiA (303 aa).

The segment at residues 272–303 (SIQQVADALEFPITKSGVNHRLRKINKIADDL) is a DNA-binding region (H-T-H motif).

Belongs to the WhiA family.

Its function is as follows. Involved in cell division and chromosome segregation. This chain is Probable cell division protein WhiA, found in Streptococcus pyogenes serotype M12 (strain MGAS2096).